The following is a 377-amino-acid chain: Chaperone protein DnaJ (377 aa).

The J domain maps to 5–70; sequence DYYEILGVER…EKRAAYDQYG (66 aa). The segment at 134-212 adopts a CR-type zinc-finger fold; the sequence is GITKDIQIQT…CHGDGRVHKT (79 aa). The Zn(2+) site is built by Cys147, Cys150, Cys164, Cys167, Cys186, Cys189, Cys200, and Cys203. 4 CXXCXGXG motif repeats span residues 147–154, 164–171, 186–193, and 200–207; these read CDHCNGSG, CPTCHGHG, CPHCHGTG, and CKKCHGDG.

Belongs to the DnaJ family. Homodimer. It depends on Zn(2+) as a cofactor.

The protein localises to the cytoplasm. In terms of biological role, participates actively in the response to hyperosmotic and heat shock by preventing the aggregation of stress-denatured proteins and by disaggregating proteins, also in an autonomous, DnaK-independent fashion. Unfolded proteins bind initially to DnaJ; upon interaction with the DnaJ-bound protein, DnaK hydrolyzes its bound ATP, resulting in the formation of a stable complex. GrpE releases ADP from DnaK; ATP binding to DnaK triggers the release of the substrate protein, thus completing the reaction cycle. Several rounds of ATP-dependent interactions between DnaJ, DnaK and GrpE are required for fully efficient folding. Also involved, together with DnaK and GrpE, in the DNA replication of plasmids through activation of initiation proteins. The sequence is that of Chaperone protein DnaJ from Actinobacillus succinogenes (strain ATCC 55618 / DSM 22257 / CCUG 43843 / 130Z).